The following is a 265-amino-acid chain: Type III pantothenate kinase (265 aa).

6-13 (DVGNTHTV) is a binding site for ATP. 112-115 (GADR) contacts substrate. Catalysis depends on Asp114, which acts as the Proton acceptor. Asp134 serves as a coordination point for K(+). ATP is bound at residue Thr137. Thr189 lines the substrate pocket.

This sequence belongs to the type III pantothenate kinase family. As to quaternary structure, homodimer. It depends on NH4(+) as a cofactor. The cofactor is K(+).

It localises to the cytoplasm. The enzyme catalyses (R)-pantothenate + ATP = (R)-4'-phosphopantothenate + ADP + H(+). It functions in the pathway cofactor biosynthesis; coenzyme A biosynthesis; CoA from (R)-pantothenate: step 1/5. Functionally, catalyzes the phosphorylation of pantothenate (Pan), the first step in CoA biosynthesis. The sequence is that of Type III pantothenate kinase from Streptomyces coelicolor (strain ATCC BAA-471 / A3(2) / M145).